Consider the following 67-residue polypeptide: Probable tautomerase K2 (67 aa).

Pro-2 serves as the catalytic Proton acceptor; via imino nitrogen.

The protein belongs to the 4-oxalocrotonate tautomerase family.

This is Probable tautomerase K2 from Dickeya dadantii (strain 3937) (Erwinia chrysanthemi (strain 3937)).